Reading from the N-terminus, the 242-residue chain is C-reactive protein 1.4 (242 aa).

An N-terminal signal peptide occupies residues 1–24 (MKTFHGPTFGTAVFLYLLLFLTSA). The region spanning 30-241 (ITSKVKFPPS…GVVLSPNEIC (212 aa)) is the Pentraxin (PTX) domain. T60 and Y63 together coordinate phosphocholine. 2 disulfides stabilise this stretch: C62–C125 and C112–C144. Residues D85 and N86 each coordinate Ca(2+). N147 is a glycosylation site (N-linked (GlcNAc...) asparagine). 4 residues coordinate Ca(2+): E168, Q169, D170, and Q180. A disulfide bond links C207 and C241.

Belongs to the pentraxin family. In terms of assembly, homopentamer. Pentraxin (or pentaxin) have a discoid arrangement of 5 non-covalently bound subunits. Requires Ca(2+) as cofactor.

It localises to the secreted. Its function is as follows. Might serve the role of immunoglobulins. This is C-reactive protein 1.4 from Limulus polyphemus (Atlantic horseshoe crab).